Here is a 491-residue protein sequence, read N- to C-terminus: Fibrinogen beta chain (491 aa).

An N-terminal signal peptide occupies residues 1–30; it reads MKRMVSWSFHKLKTMKHLLLLLLCVFLVKS. Q31 is subject to Pyrrolidone carboxylic acid. Residues 44–75 are disordered; sequence RGHRPLDKKREEAPSLRPAPPPISGGGYRARP. The beta-chain polymerization, binding distal domain of another fibrin stretch occupies residues 45–47; that stretch reads GHR. Basic and acidic residues predominate over residues 47 to 57; sequence RPLDKKREEAP. Positions 157-222 form a coiled coil; that stretch reads KRQKQVKDNE…ESDVSAQMEY (66 aa). 2 disulfide bridges follow: C231–C316 and C241–C270. One can recognise a Fibrinogen C-terminal domain in the interval 232–488; sequence NIPVVSGKEC…KMSMKIRPFF (257 aa). N-linked (GlcNAc...) asparagine glycosylation is present at N394. C424 and C437 form a disulfide bridge.

As to quaternary structure, heterohexamer; disulfide linked. Contains 2 sets of 3 non-identical chains (alpha, beta and gamma). The 2 heterotrimers are in head to head conformation with the N-termini in a small central domain. Conversion of fibrinogen to fibrin is triggered by thrombin, which cleaves fibrinopeptides A and B from alpha and beta chains, and thus exposes the N-terminal polymerization sites responsible for the formation of the soft clot. The soft clot is converted into the hard clot by factor XIIIA which catalyzes the epsilon-(gamma-glutamyl)lysine cross-linking between gamma chains (stronger) and between alpha chains (weaker) of different monomers. In terms of tissue distribution, detected in blood plasma (at protein level).

The protein localises to the secreted. In terms of biological role, cleaved by the protease thrombin to yield monomers which, together with fibrinogen alpha (FGA) and fibrinogen gamma (FGG), polymerize to form an insoluble fibrin matrix. Fibrin has a major function in hemostasis as one of the primary components of blood clots. In addition, functions during the early stages of wound repair to stabilize the lesion and guide cell migration during re-epithelialization. Was originally thought to be essential for platelet aggregation, based on in vitro studies using anticoagulated blood. However subsequent studies have shown that it is not absolutely required for thrombus formation in vivo. Enhances expression of SELP in activated platelets. Maternal fibrinogen is essential for successful pregnancy. Fibrin deposition is also associated with infection, where it protects against IFNG-mediated hemorrhage. May also facilitate the antibacterial immune response via both innate and T-cell mediated pathways. This is Fibrinogen beta chain (FGB) from Homo sapiens (Human).